A 193-amino-acid chain; its full sequence is Hydroxyacylglutathione hydrolase-like protein (193 aa).

Zn(2+) contacts are provided by His54, His56, Asp58, His59, and His110.

The protein belongs to the metallo-beta-lactamase superfamily. Glyoxalase II family. Zn(2+) serves as cofactor.

Its function is as follows. Hydrolase acting on ester bonds. The sequence is that of Hydroxyacylglutathione hydrolase-like protein (HAGHL) from Bos taurus (Bovine).